A 468-amino-acid polypeptide reads, in one-letter code: Adenylyltransferase and sulfurtransferase MOCS3-1 (468 aa).

Residues Gly-111, Asp-132, 139–143, Lys-156, and 200–201 contribute to the ATP site; these read NNLHR and DN. Zn(2+) contacts are provided by Cys-241 and Cys-244. The active-site Glycyl thioester intermediate; for adenylyltransferase activity is the Cys-258. Zn(2+) contacts are provided by Cys-316 and Cys-319. Positions 371–466 constitute a Rhodanese domain; the sequence is DGEPHLLLDV…WGRDVDPDFP (96 aa). Cys-426 acts as the Cysteine persulfide intermediate; for sulfurtransferase activity in catalysis.

It in the N-terminal section; belongs to the HesA/MoeB/ThiF family. UBA4 subfamily. The cofactor is Zn(2+).

It localises to the cytoplasm. The enzyme catalyses [molybdopterin-synthase sulfur-carrier protein]-C-terminal Gly-Gly + ATP + H(+) = [molybdopterin-synthase sulfur-carrier protein]-C-terminal Gly-Gly-AMP + diphosphate. The catalysed reaction is [molybdopterin-synthase sulfur-carrier protein]-C-terminal Gly-Gly-AMP + S-sulfanyl-L-cysteinyl-[cysteine desulfurase] + AH2 = [molybdopterin-synthase sulfur-carrier protein]-C-terminal-Gly-aminoethanethioate + L-cysteinyl-[cysteine desulfurase] + A + AMP + 2 H(+). It participates in tRNA modification; 5-methoxycarbonylmethyl-2-thiouridine-tRNA biosynthesis. Its pathway is cofactor biosynthesis; molybdopterin biosynthesis. Plays a central role in 2-thiolation of mcm(5)S(2)U at tRNA wobble positions of cytosolic tRNA(Lys), tRNA(Glu) and tRNA(Gln). Also essential during biosynthesis of the molybdenum cofactor. Acts by mediating the C-terminal thiocarboxylation of sulfur carriers URM1 and MOCS2A. Its N-terminus first activates URM1 and MOCS2A as acyl-adenylates (-COAMP), then the persulfide sulfur on the catalytic cysteine is transferred to URM1 and MOCS2A to form thiocarboxylation (-COSH) of their C-terminus. The reaction probably involves hydrogen sulfide that is generated from the persulfide intermediate and that acts as a nucleophile towards URM1 and MOCS2A. Subsequently, a transient disulfide bond is formed. Does not use thiosulfate as sulfur donor; NFS1 probably acting as a sulfur donor for thiocarboxylation reactions. The chain is Adenylyltransferase and sulfurtransferase MOCS3-1 from Zea mays (Maize).